A 117-amino-acid polypeptide reads, in one-letter code: Prefoldin subunit beta (117 aa).

Belongs to the prefoldin subunit beta family. Heterohexamer of two alpha and four beta subunits.

It is found in the cytoplasm. Its function is as follows. Molecular chaperone capable of stabilizing a range of proteins. Seems to fulfill an ATP-independent, HSP70-like function in archaeal de novo protein folding. The protein is Prefoldin subunit beta (pfdB) of Pyrococcus abyssi (strain GE5 / Orsay).